We begin with the raw amino-acid sequence, 240 residues long: uncharacterized protein (240 aa).

Over residues 197 to 210 (PLKSHSASRLNHLT) the composition is skewed to polar residues. The segment at 197–222 (PLKSHSASRLNHLTPSPRPGETPLEN) is disordered.

This is an uncharacterized protein from Caenorhabditis elegans.